Reading from the N-terminus, the 265-residue chain is Ribosomal RNA small subunit methyltransferase A (265 aa).

S-adenosyl-L-methionine-binding residues include His-13, Leu-15, Gly-40, Glu-61, Asp-85, and Asn-103.

The protein belongs to the class I-like SAM-binding methyltransferase superfamily. rRNA adenine N(6)-methyltransferase family. RsmA subfamily.

Its subcellular location is the cytoplasm. It carries out the reaction adenosine(1518)/adenosine(1519) in 16S rRNA + 4 S-adenosyl-L-methionine = N(6)-dimethyladenosine(1518)/N(6)-dimethyladenosine(1519) in 16S rRNA + 4 S-adenosyl-L-homocysteine + 4 H(+). In terms of biological role, specifically dimethylates two adjacent adenosines (A1518 and A1519) in the loop of a conserved hairpin near the 3'-end of 16S rRNA in the 30S particle. May play a critical role in biogenesis of 30S subunits. This chain is Ribosomal RNA small subunit methyltransferase A, found in Bordetella bronchiseptica (strain ATCC BAA-588 / NCTC 13252 / RB50) (Alcaligenes bronchisepticus).